Consider the following 969-residue polypeptide: Glycine dehydrogenase (decarboxylating) (969 aa).

An N6-(pyridoxal phosphate)lysine modification is found at lysine 716.

It belongs to the GcvP family. The glycine cleavage system is composed of four proteins: P, T, L and H. Pyridoxal 5'-phosphate is required as a cofactor.

The enzyme catalyses N(6)-[(R)-lipoyl]-L-lysyl-[glycine-cleavage complex H protein] + glycine + H(+) = N(6)-[(R)-S(8)-aminomethyldihydrolipoyl]-L-lysyl-[glycine-cleavage complex H protein] + CO2. Functionally, the glycine cleavage system catalyzes the degradation of glycine. The P protein binds the alpha-amino group of glycine through its pyridoxal phosphate cofactor; CO(2) is released and the remaining methylamine moiety is then transferred to the lipoamide cofactor of the H protein. This Shewanella woodyi (strain ATCC 51908 / MS32) protein is Glycine dehydrogenase (decarboxylating).